The sequence spans 596 residues: Linalool synthase TPS3, chloroplastic (596 aa).

The transit peptide at 1–39 (MISSLNPLFTTHRSGVIAQQFFASSAAASINSVSSLKIA) directs the protein to the chloroplast. (2E)-geranyl diphosphate-binding residues include Arg-308, Asp-345, Asp-349, Arg-486, and Asn-489. Positions 345 and 349 each coordinate Mg(2+). A DDXXD motif motif is present at residues 345 to 349 (DDIYD). Positions 489, 493, and 497 each coordinate Mg(2+).

Belongs to the terpene synthase family. Tpsb subfamily. Monomer. Requires Mg(2+) as cofactor. Mn(2+) serves as cofactor. In terms of tissue distribution, expressed in flowers and fruits.

It is found in the plastid. It localises to the chloroplast. The enzyme catalyses (2E)-geranyl diphosphate = beta-myrcene + diphosphate. It carries out the reaction (2E)-geranyl diphosphate + H2O = linalool + diphosphate. It catalyses the reaction (2E)-geranyl diphosphate = (Z)-beta-ocimene + diphosphate. The catalysed reaction is (2E)-geranyl diphosphate = (E)-beta-ocimene + diphosphate. The protein operates within secondary metabolite biosynthesis; terpenoid biosynthesis. Monoterpene synthase (mono-TPS) involved in the biosynthesis of monoterpenes natural products, constituent of coffee beverage aroma. Catalyzes the conversion of (2E)-geranyl diphosphate (GPP) into linalool and beta-myrcene, and, as minor products, cis-ocimene and trans-ocimene. Not able to use geranylgeranyl pyrophosphate (GGPP) and farnesyl pyrophosphate (FPP) as substrates. The protein is Linalool synthase TPS3, chloroplastic of Coffea arabica (Arabian coffee).